A 200-amino-acid polypeptide reads, in one-letter code: MPIDSSPLPCSVLLLSGGRGQRMGGQDKGLLEWRGQPLIAHLQRLARPLTDDLIISCNRNPERYADYADQLVNDDSPDFPGPLAGIRAGLAAARHEHLLILPCDVPHIDAPLLADLRETARRNLLLPVMVRHGEFWEPLICIIPTRLRAAVEDAWHAGERSPRKIFLQLGGVGLECPADDPRLANLNTPQLLQTPSGVSE.

GTP-binding positions include 15–17 (LSG), lysine 28, aspartate 74, and aspartate 104. Residue aspartate 104 coordinates Mg(2+).

It belongs to the MobA family. Monomer. It depends on Mg(2+) as a cofactor.

The protein resides in the cytoplasm. It catalyses the reaction Mo-molybdopterin + GTP + H(+) = Mo-molybdopterin guanine dinucleotide + diphosphate. Its function is as follows. Transfers a GMP moiety from GTP to Mo-molybdopterin (Mo-MPT) cofactor (Moco or molybdenum cofactor) to form Mo-molybdopterin guanine dinucleotide (Mo-MGD) cofactor. This is Molybdenum cofactor guanylyltransferase from Pseudomonas fluorescens (strain SBW25).